The sequence spans 93 residues: Small ribosomal subunit protein uS19 (93 aa).

It belongs to the universal ribosomal protein uS19 family.

In terms of biological role, protein S19 forms a complex with S13 that binds strongly to the 16S ribosomal RNA. This chain is Small ribosomal subunit protein uS19, found in Symbiobacterium thermophilum (strain DSM 24528 / JCM 14929 / IAM 14863 / T).